Consider the following 120-residue polypeptide: Large ribosomal subunit protein uL18 (120 aa).

The protein belongs to the universal ribosomal protein uL18 family. Part of the 50S ribosomal subunit; part of the 5S rRNA/L5/L18/L25 subcomplex. Contacts the 5S and 23S rRNAs.

In terms of biological role, this is one of the proteins that bind and probably mediate the attachment of the 5S RNA into the large ribosomal subunit, where it forms part of the central protuberance. The chain is Large ribosomal subunit protein uL18 from Brucella abortus (strain S19).